Reading from the N-terminus, the 1244-residue chain is Structural polyprotein (1244 aa).

Residues 1–113 are disordered; sequence MNSVFYNPFG…GKRQRTALKF (113 aa). Over residues 35–44 the composition is skewed to polar residues; that stretch reads GLTTQIQQLT. Residues 35–69 are host transcription inhibition; that stretch reads GLTTQIQQLTRAVRALVLDNATRRQRPAPRTRPRK. The span at 57–81 shows a compositional bias: basic residues; sequence RRQRPAPRTRPRKPKTQKPKPKKQN. The Nuclear localization signal signature appears at 62-103; sequence APRTRPRKPKTQKPKPKKQNQKPPQQQKKGKNQPQQPKKPKP. A compositionally biased stretch (low complexity) spans 82 to 97; it reads QKPPQQQKKGKNQPQQ. The tract at residues 85–118 is binding to the viral RNA; sequence PQQQKKGKNQPQQPKKPKPGKRQRTALKFEADRT. Over residues 99–109 the composition is skewed to basic residues; sequence KKPKPGKRQRT. Residues 103 to 117 form a ribosome-binding region; that stretch reads PGKRQRTALKFEADR. Residues 117–267 form the Peptidase S3 domain; sequence RTFVGKNEDG…KTTHEDTVEW (151 aa). Catalysis depends on H144, which acts as the Charge relay system. Positions 149-159 match the Nuclear export signal motif; sequence IDHPALAKLKF. The segment at 160–165 is interaction with spike glycoprotein E2; sequence TKSSSY. Residue D166 is the Charge relay system of the active site. The dimerization of the capsid protein stretch occupies residues 188 to 198; it reads PEVFYNWHHGA. The active-site Charge relay system is the S218. The interval 224–228 is dimerization of the capsid protein; the sequence is DNSGK. Residues 252–256 are interaction with spike glycoprotein E2; the sequence is KKGAA. The segment at 268 to 280 is functions as an uncleaved signal peptide for the precursor of protein E3/E2; sequence SRAITAMCILQNV. Residues 268-696 are Extracellular-facing; sequence SRAITAMCIL…HYYHLYPFYT (429 aa). Residue N279 is glycosylated (N-linked (GlcNAc...) asparagine; by host). Intrachain disulfides connect C284–C290, C481–C595, C530–C555, and C532–C549. N-linked (GlcNAc...) asparagine; by host glycosylation occurs at N525. A glycan (N-linked (GlcNAc...) asparagine; by host) is linked at N647. Residues 697–717 traverse the membrane as a helical segment; it reads VTVLSGMGLAICAGLVISILC. At 718 to 751 the chain is on the cytoplasmic side; sequence CCKARRDCLTPYQLAPNATVPFLVTLCCCFQRTS. The segment at 720–724 is interaction with the capsid protein; it reads KARRD. Residues C725, C745, and C746 are each lipidated (S-palmitoyl cysteine; by host). C725 and C746 are oxidised to a cystine. Residues 752–764 lie on the Extracellular side of the membrane; sequence ADEFTDTMGYLWQ. Helical transmembrane passes span 765-785 and 786-805; these read HSQTMFWIQLVIPLAAVITLV and RCCSCCLPFLLVASPPNKAD. Residues 806–1218 are Extracellular-facing; that stretch reads AYEHTITVPN…KTSWNWITAL (413 aa). Intrachain disulfides connect C855–C920, C868–C900, C869–C902, and C874–C884. Positions 890–907 are E1 fusion peptide loop; the sequence is VYPFLWGGAQCFCDSENS. N945 and N1051 each carry an N-linked (GlcNAc...) asparagine; by host glycan. 4 disulfides stabilise this stretch: C1065–C1077, C1106–C1181, C1111–C1185, and C1133–C1175. Residues 1219–1239 form a helical membrane-spanning segment; it reads MGGISSIAAIAAIVLVIALVF. Topologically, residues 1240–1244 are cytoplasmic; that stretch reads TAQHR.

As to quaternary structure, homodimer. Homomultimer. Interacts with host karyopherin KPNA4; this interaction allows the nuclear import of the viral capsid protein. Interacts with spike glycoprotein E2. Interacts with host IRAK1; the interaction leads to inhibition of IRAK1-dependent signaling. The precursor of protein E3/E2 and E1 form a heterodimer shortly after synthesis. In terms of assembly, the precursor of protein E3/E2 and E1 form a heterodimer shortly after synthesis. Processing of the precursor of protein E3/E2 into E2 and E3 results in a heterodimer of the spike glycoproteins E2 and E1. Spike at virion surface are constituted of a trimer of E2-E1 heterodimers. After target cell attachment and endocytosis, E1 change conformation to form homotrimers. Interacts with 6K protein. As to quaternary structure, interacts with spike glycoprotein E1. Processing of the precursor of protein E3/E2 into E2 and E3 results in a heterodimer of the spike glycoproteins E2 and E1. Spike at virion surface are constituted of a trimer of E2-E1 heterodimers. Interacts with 6K protein. Oligomer. Interacts with spike glycoprotein E1. Interacts with spike glycoprotein E2. Structural polyprotein: Specific enzymatic cleavages in vivo yield mature proteins. Capsid protein is auto-cleaved during polyprotein translation, unmasking a signal peptide at the N-terminus of the precursor of E3/E2. The remaining polyprotein is then targeted to the host endoplasmic reticulum, where host signal peptidase cleaves it into pE2, 6K and E1 proteins. pE2 is further processed to mature E3 and E2 by host furin in trans-Golgi vesicle. Post-translationally, palmitoylated via thioester bonds. These palmitoylations may induce disruption of the C-terminus transmembrane. This would result in the reorientation of E2 C-terminus from lumenal to cytoplasmic side. In terms of processing, N-glycosylated. Palmitoylated via thioester bonds.

The protein resides in the virion. It localises to the host cytoplasm. The protein localises to the host cell membrane. It is found in the host nucleus. Its subcellular location is the virion membrane. The protein resides in the host Golgi apparatus. It localises to the host trans-Golgi network. The protein localises to the host endoplasmic reticulum. The catalysed reaction is Autocatalytic release of the core protein from the N-terminus of the togavirus structural polyprotein by hydrolysis of a -Trp-|-Ser- bond.. Forms an icosahedral capsid with a T=4 symmetry composed of 240 copies of the capsid protein surrounded by a lipid membrane through which penetrate 80 spikes composed of trimers of E1-E2 heterodimers. The capsid protein binds to the viral RNA genome at a site adjacent to a ribosome binding site for viral genome translation following genome release. Possesses a protease activity that results in its autocatalytic cleavage from the nascent structural protein. Following its self-cleavage, the capsid protein transiently associates with ribosomes, and within several minutes the protein binds to viral RNA and rapidly assembles into icosahedric core particles. The resulting nucleocapsid eventually associates with the cytoplasmic domain of the spike glycoprotein E2 at the cell membrane, leading to budding and formation of mature virions. In case of infection, new virions attach to target cells and after clathrin-mediated endocytosis their membrane fuses with the host endosomal membrane. This leads to the release of the nucleocapsid into the cytoplasm, followed by an uncoating event necessary for the genomic RNA to become accessible. The uncoating might be triggered by the interaction of capsid proteins with ribosomes. Binding of ribosomes would release the genomic RNA since the same region is genomic RNA-binding and ribosome-binding. Specifically inhibits interleukin-1 receptor-associated kinase 1/IRAK1-dependent signaling during viral entry, representing a means by which the alphaviruses may evade innate immune detection and activation prior to viral gene expression. Its function is as follows. Provides the signal sequence for the translocation of the precursor of protein E3/E2 to the host endoplasmic reticulum. Furin-cleaved E3 remains associated with spike glycoprotein E1 and mediates pH protection of the latter during the transport via the secretory pathway. After virion release from the host cell, the assembly protein E3 is gradually released in the extracellular space. Functionally, plays a role in viral attachment to target host cell, by binding to the cell receptor. Synthesized as a p62 precursor which is processed by furin at the cell membrane just before virion budding, giving rise to E2-E1 heterodimer. The p62-E1 heterodimer is stable, whereas E2-E1 is unstable and dissociate at low pH. p62 is processed at the last step, presumably to avoid E1 fusion activation before its final export to cell surface. E2 C-terminus contains a transitory transmembrane that would be disrupted by palmitoylation, resulting in reorientation of the C-terminal tail from lumenal to cytoplasmic side. This step is critical since E2 C-terminus is involved in budding by interacting with capsid proteins. This release of E2 C-terminus in cytoplasm occurs lately in protein export, and precludes premature assembly of particles at the endoplasmic reticulum membrane. In terms of biological role, acts as a viroporin that participates in virus glycoprotein processing and transport to the plasma membrane, cell permeabilization and budding of viral particles. Disrupts the calcium homeostasis of the cell, probably at the endoplasmic reticulum level. This leads to cytoplasmic calcium elevation. Because of its lipophilic properties, the 6K protein is postulated to influence the selection of lipids that interact with the transmembrane domains of the glycoproteins, which, in turn, affects the deformability of the bilayer required for the extreme curvature that occurs as budding proceeds. Present in low amount in virions, about 3% compared to viral glycoproteins. Class II viral fusion protein. Fusion activity is inactive as long as E1 is bound to E2 in mature virion. After virus attachment to target cell and endocytosis, acidification of the endosome induce dissociation of E1/E2 heterodimer and concomitant trimerization of the E1 subunits. This E1 trimer is fusion active, and promotes release of viral nucleocapsid in cytoplasm after endosome and viral membrane fusion. Efficient fusion requires the presence of cholesterol and sphingolipid in the target membrane. The chain is Structural polyprotein from Aedes (AURAV).